The following is a 127-amino-acid chain: Aspartate 1-decarboxylase (127 aa).

The active-site Schiff-base intermediate with substrate; via pyruvic acid is Ser-25. Pyruvic acid (Ser) is present on Ser-25. Residue Thr-57 participates in substrate binding. The active-site Proton donor is Tyr-58. 73–75 (GAA) lines the substrate pocket.

This sequence belongs to the PanD family. As to quaternary structure, heterooctamer of four alpha and four beta subunits. Pyruvate is required as a cofactor. In terms of processing, is synthesized initially as an inactive proenzyme, which is activated by self-cleavage at a specific serine bond to produce a beta-subunit with a hydroxyl group at its C-terminus and an alpha-subunit with a pyruvoyl group at its N-terminus.

The protein localises to the cytoplasm. It carries out the reaction L-aspartate + H(+) = beta-alanine + CO2. Its pathway is cofactor biosynthesis; (R)-pantothenate biosynthesis; beta-alanine from L-aspartate: step 1/1. Its function is as follows. Catalyzes the pyruvoyl-dependent decarboxylation of aspartate to produce beta-alanine. This Staphylococcus aureus (strain bovine RF122 / ET3-1) protein is Aspartate 1-decarboxylase.